The chain runs to 669 residues: Zinc finger CCCH domain-containing protein 17 (669 aa).

Over residues Met-1–Gln-11 the composition is skewed to low complexity. Residues Met-1–Ser-23 form a disordered region. 3 C3H1-type zinc fingers span residues Asp-34–Tyr-58, Arg-60–Leu-86, and Ala-114–Asn-141. Disordered stretches follow at residues Pro-150 to Leu-175, Val-285 to Ser-306, Gly-376 to Glu-589, and Glu-642 to Ser-669. Basic and acidic residues-rich tracts occupy residues Lys-164–Leu-175, Val-285–Ser-299, Ser-392–Arg-406, Lys-420–His-464, Arg-478–Pro-499, and Asn-547–Glu-579. 2 stretches are compositionally biased toward acidic residues: residues Val-580–Glu-589 and Glu-642–Asp-659. Residues Ile-660–Ser-669 are compositionally biased toward basic and acidic residues.

The chain is Zinc finger CCCH domain-containing protein 17 from Arabidopsis thaliana (Mouse-ear cress).